A 772-amino-acid polypeptide reads, in one-letter code: DnaJ homolog subfamily C member 16 (772 aa).

An N-terminal signal peptide occupies residues 1–25 (MELKRLGVSWRFLMVLVLILQSLSA). Residues 26-533 (LDFDPYRVLG…ESLLHSNWRE (508 aa)) lie on the Cytoplasmic side of the membrane. The J domain maps to 29 to 93 (DPYRVLGVSR…EKRTNYDHYG (65 aa)). The region spanning 119 to 245 (FDESFFHFPF…LRQFVESLLP (127 aa)) is the Thioredoxin domain. Residues 534-554 (MMPLLSLIFSALFILFGTVMV) traverse the membrane as a helical; Anchor for type IV membrane protein segment. The Extracellular portion of the chain corresponds to 555–772 (QAFSDSNEER…FYIPSWPELD (218 aa)). Positions 560–591 (SNEERESHPADKEEVPEKAGKTEPSFTKESSS) are disordered. Residues 561–580 (NEERESHPADKEEVPEKAGK) are compositionally biased toward basic and acidic residues. An N-linked (GlcNAc...) asparagine glycan is attached at Asn629.

It localises to the endoplasmic reticulum membrane. In terms of biological role, plays an important role in regulating the size of autophagosomes during the formation process. The polypeptide is DnaJ homolog subfamily C member 16 (Dnajc16) (Mus musculus (Mouse)).